The sequence spans 257 residues: Ribonuclease HII (257 aa).

The 186-residue stretch at 72 to 257 (TYIAGIDEVG…FAPIKDMIQK (186 aa)) folds into the RNase H type-2 domain. A divalent metal cation-binding residues include D78, E79, and D170.

It belongs to the RNase HII family. Mn(2+) is required as a cofactor. The cofactor is Mg(2+).

The protein localises to the cytoplasm. It carries out the reaction Endonucleolytic cleavage to 5'-phosphomonoester.. Functionally, endonuclease that specifically degrades the RNA of RNA-DNA hybrids. In Bacillus cereus (strain B4264), this protein is Ribonuclease HII.